Consider the following 255-residue polypeptide: ATP synthase subunit a 2 (255 aa).

5 helical membrane passes run 26-46 (SINI…IGVF), 86-106 (LIGP…SIDL), 131-151 (DVNV…GYTL), 205-225 (MIFI…SVPW), and 230-250 (ILIV…YLAM).

The protein belongs to the ATPase A chain family. As to quaternary structure, F-type ATPases have 2 components, CF(1) - the catalytic core - and CF(0) - the membrane proton channel. CF(1) has five subunits: alpha(3), beta(3), gamma(1), delta(1), epsilon(1). CF(0) has three main subunits: a(1), b(2) and c(9-12). The alpha and beta chains form an alternating ring which encloses part of the gamma chain. CF(1) is attached to CF(0) by a central stalk formed by the gamma and epsilon chains, while a peripheral stalk is formed by the delta and b chains.

The protein localises to the cell inner membrane. Functionally, key component of the proton channel; it plays a direct role in the translocation of protons across the membrane. The polypeptide is ATP synthase subunit a 2 (Photobacterium profundum (strain SS9)).